The following is a 207-amino-acid chain: N-(5'-phosphoribosyl)anthranilate isomerase (207 aa).

Belongs to the TrpF family.

It catalyses the reaction N-(5-phospho-beta-D-ribosyl)anthranilate = 1-(2-carboxyphenylamino)-1-deoxy-D-ribulose 5-phosphate. It functions in the pathway amino-acid biosynthesis; L-tryptophan biosynthesis; L-tryptophan from chorismate: step 3/5. This is N-(5'-phosphoribosyl)anthranilate isomerase from Stutzerimonas stutzeri (strain A1501) (Pseudomonas stutzeri).